We begin with the raw amino-acid sequence, 288 residues long: Nucleotide-binding protein Veis_1053 (288 aa).

G10–S17 is a binding site for ATP. Residue D59–S62 participates in GTP binding.

The protein belongs to the RapZ-like family.

Displays ATPase and GTPase activities. In Verminephrobacter eiseniae (strain EF01-2), this protein is Nucleotide-binding protein Veis_1053.